The chain runs to 344 residues: Protein RecA (344 aa).

Residue 66 to 73 (GPESSGKT) participates in ATP binding.

Belongs to the RecA family.

It localises to the cytoplasm. Can catalyze the hydrolysis of ATP in the presence of single-stranded DNA, the ATP-dependent uptake of single-stranded DNA by duplex DNA, and the ATP-dependent hybridization of homologous single-stranded DNAs. It interacts with LexA causing its activation and leading to its autocatalytic cleavage. This is Protein RecA from Azoarcus sp. (strain BH72).